A 303-amino-acid chain; its full sequence is Digeranylgeranylglyceryl phosphate synthase (303 aa).

The next 7 helical transmembrane spans lie at 23-43, 88-108, 130-150, 164-184, 206-228, 232-254, and 272-292; these read VLGV…AAIA, LALA…PLTG, LPGN…GSLA, TIPI…VKGV, FALR…AAPL, GYAF…AACL, and VAMF…PVFY.

This sequence belongs to the UbiA prenyltransferase family. DGGGP synthase subfamily. The cofactor is Mg(2+).

The protein localises to the cell membrane. It carries out the reaction sn-3-O-(geranylgeranyl)glycerol 1-phosphate + (2E,6E,10E)-geranylgeranyl diphosphate = 2,3-bis-O-(geranylgeranyl)-sn-glycerol 1-phosphate + diphosphate. It participates in membrane lipid metabolism; glycerophospholipid metabolism. Its function is as follows. Prenyltransferase that catalyzes the transfer of the geranylgeranyl moiety of geranylgeranyl diphosphate (GGPP) to the C2 hydroxyl of (S)-3-O-geranylgeranylglyceryl phosphate (GGGP). This reaction is the second ether-bond-formation step in the biosynthesis of archaeal membrane lipids. The chain is Digeranylgeranylglyceryl phosphate synthase from Ignicoccus hospitalis (strain KIN4/I / DSM 18386 / JCM 14125).